A 105-amino-acid chain; its full sequence is Saimiri transformation-associated protein (105 aa).

Residues 1-75 (MASEPNLRYP…GPPGPSGLPG (75 aa)) are Cytoplasmic-facing. The disordered stretch occupies residues 1–75 (MASEPNLRYP…GPPGPSGLPG (75 aa)). A Collagen-like domain is found at 15 to 74 (GDRGPQGPPGPPGPQGPPGPQGPPGPQGPPGPQGPPGPQGPPGPQGPPGPPGPPGPSGLP). Residues 20–71 (QGPPGPPGPQGPPGPQGPPGPQGPPGPQGPPGPQGPPGPQGPPGPPGPPGPS) are compositionally biased toward pro residues. The chain crosses the membrane as a helical span at residues 76 to 96 (LFVTNLLLGIIILLLLIIVAI). The Extracellular segment spans residues 97-105 (LLVSKLVVN).

In terms of assembly, binds to host RAS and TRAF2.

The protein localises to the host membrane. In terms of biological role, acts synergistically with Tip to stimulate NF-kappa-B activity and interleukin-2 gene expression by binding to host TRAF proteins. Activation of NF-kappa-B protects lymphocytes from apoptosis, thereby facilitating viral induced cell transformation. The sequence is that of Saimiri transformation-associated protein from Saimiriine herpesvirus 2 (strain 484-77) (SaHV-2).